We begin with the raw amino-acid sequence, 199 residues long: NAD(P)H dehydrogenase (quinone) (199 aa).

The region spanning 4 to 190 (VLVLYYSSYG…AMARFQGGHV (187 aa)) is the Flavodoxin-like domain. FMN contacts are provided by residues 10-15 (SSYGHI) and 78-80 (TRF). Tyr-12 provides a ligand contact to NAD(+). Trp-98 lines the substrate pocket. FMN contacts are provided by residues 113–119 (STATQHG) and His-134.

This sequence belongs to the WrbA family. It depends on FMN as a cofactor.

It carries out the reaction a quinone + NADH + H(+) = a quinol + NAD(+). It catalyses the reaction a quinone + NADPH + H(+) = a quinol + NADP(+). In Azoarcus sp. (strain BH72), this protein is NAD(P)H dehydrogenase (quinone).